The primary structure comprises 338 residues: Ketol-acid reductoisomerase (NADP(+)) (338 aa).

The region spanning 1 to 181 is the KARI N-terminal Rossmann domain; sequence MKVFYDKDCD…GGGRTGIIET (181 aa). NADP(+) contacts are provided by residues 24–27, Arg-47, Ser-50, Thr-52, and 82–85; these read YGSQ and DEFQ. His-107 is a catalytic residue. Gly-133 lines the NADP(+) pocket. In terms of domain architecture, KARI C-terminal knotted spans 182 to 327; it reads TFKDETETDL…EQLRSMMPWI (146 aa). Residues Asp-190, Glu-194, Glu-226, and Glu-230 each contribute to the Mg(2+) site. Ser-251 lines the substrate pocket.

The protein belongs to the ketol-acid reductoisomerase family. Mg(2+) is required as a cofactor.

It carries out the reaction (2R)-2,3-dihydroxy-3-methylbutanoate + NADP(+) = (2S)-2-acetolactate + NADPH + H(+). It catalyses the reaction (2R,3R)-2,3-dihydroxy-3-methylpentanoate + NADP(+) = (S)-2-ethyl-2-hydroxy-3-oxobutanoate + NADPH + H(+). It participates in amino-acid biosynthesis; L-isoleucine biosynthesis; L-isoleucine from 2-oxobutanoate: step 2/4. It functions in the pathway amino-acid biosynthesis; L-valine biosynthesis; L-valine from pyruvate: step 2/4. Its function is as follows. Involved in the biosynthesis of branched-chain amino acids (BCAA). Catalyzes an alkyl-migration followed by a ketol-acid reduction of (S)-2-acetolactate (S2AL) to yield (R)-2,3-dihydroxy-isovalerate. In the isomerase reaction, S2AL is rearranged via a Mg-dependent methyl migration to produce 3-hydroxy-3-methyl-2-ketobutyrate (HMKB). In the reductase reaction, this 2-ketoacid undergoes a metal-dependent reduction by NADPH to yield (R)-2,3-dihydroxy-isovalerate. This is Ketol-acid reductoisomerase (NADP(+)) from Pseudomonas fluorescens (strain ATCC BAA-477 / NRRL B-23932 / Pf-5).